The primary structure comprises 373 residues: XK-related protein 9 (373 aa).

Transmembrane regions (helical) follow at residues 8-28, 38-58, 166-186, 203-223, 224-244, 256-276, 295-315, and 318-338; these read FMMSVLGIIIYVTDLIVDIWV, YVFSALALSFMLFGTLVAQCF, AAIMVSCCAISWSTVDYQVAL, ITYLFYKLFTLLSWMLSVVLL, LFLNVKIALFLLLFLWLLGII, CISMEFLYRIVVGFILIFTFF, VLGTLGILTVFWVCPLNIFNP, and FIPISITIVLTLLLGILFLIV.

It belongs to the XK family. Undergoes proteolytic processing by caspase-3 (CASP3), caspase-6 (CASP6) and caspase-7 (CASP7) to generate the XK-related protein 9, processed form, leading to its activation.

It localises to the cell membrane. It catalyses the reaction a 1,2-diacyl-sn-glycero-3-phospho-L-serine(in) = a 1,2-diacyl-sn-glycero-3-phospho-L-serine(out). With respect to regulation, activated upon caspase cleavage to generate the XK-related protein 9, processed form. Does not act prior the onset of apoptosis. In terms of biological role, phospholipid scramblase that promotes phosphatidylserine exposure on apoptotic cell surface. Phosphatidylserine is a specific marker only present at the surface of apoptotic cells and acts as a specific signal for engulfment. This Pan troglodytes (Chimpanzee) protein is XK-related protein 9.